The primary structure comprises 199 residues: NADH-ubiquinone oxidoreductase chain 6 (199 aa).

The next 5 helical transmembrane spans lie at 1–21 (MILF…VIRA), 27–47 (SVLF…LLGL), 49–69 (FFAM…FLFV), 87–107 (YLPV…LMVD), and 150–170 (FFLF…AIVL).

It belongs to the complex I subunit 6 family.

It is found in the mitochondrion membrane. It catalyses the reaction a ubiquinone + NADH + 5 H(+)(in) = a ubiquinol + NAD(+) + 4 H(+)(out). Its function is as follows. Core subunit of the mitochondrial membrane respiratory chain NADH dehydrogenase (Complex I) that is believed to belong to the minimal assembly required for catalysis. Complex I functions in the transfer of electrons from NADH to the respiratory chain. The immediate electron acceptor for the enzyme is believed to be ubiquinone. The protein is NADH-ubiquinone oxidoreductase chain 6 (ND6) of Marchantia polymorpha (Common liverwort).